The chain runs to 148 residues: Cytochrome c-type biogenesis protein CcmE (148 aa).

At 1 to 7 (MKPRSKR) the chain is on the cytoplasmic side. The chain crosses the membrane as a helical; Signal-anchor for type II membrane protein span at residues 8–28 (LLLVAGAVALLVGAVALVLNA). Residues 29-148 (FQQNLVFFHT…AQKAAQTVQQ (120 aa)) lie on the Periplasmic side of the membrane. Heme contacts are provided by H123 and Y127.

This sequence belongs to the CcmE/CycJ family.

The protein localises to the cell inner membrane. Its function is as follows. Heme chaperone required for the biogenesis of c-type cytochromes. Transiently binds heme delivered by CcmC and transfers the heme to apo-cytochromes in a process facilitated by CcmF and CcmH. In Aromatoleum aromaticum (strain DSM 19018 / LMG 30748 / EbN1) (Azoarcus sp. (strain EbN1)), this protein is Cytochrome c-type biogenesis protein CcmE.